The primary structure comprises 58 residues: uncharacterized protein (58 aa).

This is an uncharacterized protein from Enterobacteria phage T4 (Bacteriophage T4).